The following is a 459-amino-acid chain: Cyclooctat-9-en-7-ol 5-monooxygenase (459 aa).

The tract at residues 1–27 (MRERGPVTPAKSSAPPERPWTTGTAPG) is disordered. Position 408 (C408) interacts with heme.

Belongs to the cytochrome P450 family. Heme is required as a cofactor.

The enzyme catalyses cyclooctat-9-en-7-ol + AH2 + O2 = cyclooctat-9-ene-5,7-diol + A + H2O. Involved in the biosynthesis of cyclooctatin, a potent inhibitor of lysophospholipase. Catalyzes the stereospecific hydroxylation of cyclooctat-9-en-7-ol to form cyclooctat-9-ene-5,7-diol. This Streptomyces melanosporofaciens protein is Cyclooctat-9-en-7-ol 5-monooxygenase.